Here is a 532-residue protein sequence, read N- to C-terminus: MLASTFSYRMYKTALILAALLGSGQAQQVGTSQAEVHPSMTWQSCTAGGSCTTNNGKVVIDANWRWVHKVGDYTNCYTGNTWDTTICPDDATCASNCALEGANYESTYGVTASGNSLRLNFVTTSQQKNIGSRLYMMKDDSTYEMFKLLNQEFTFDVDVSNLPCGLNGALYFVAMDADGGMSKYPTNKAGAKYGTGYCDSQCPRDLKFINGQANVEGWQPSSNDANAGTGNHGSCCAEMDIWEANSISTAFTPHPCDTPGQVMCTGDACGGTYSSDRYGGTCDPDGCDFNSFRQGNKTFYGPGMTVDTKSKFTVVTQFITDDGTSSGTLKEIKRFYVQNGKVIPNSESTWTGVSGNSITTEYCTAQKSLFQDQNVFEKHGGLEGMGAALAQGMVLVMSLWDDHSANMLWLDSNYPTTASSTTPGVARGTCDISSGVPADVEANHPDAYVVYSNIKVGPIGSTFNSGGSNPGGGTTTTTTTQPTTTTTTAGNPGGTGVAQHYGQCGGIGWTGPTTCASPYTCQKLNDYYSQCL.

Residues 1–26 (MLASTFSYRMYKTALILAALLGSGQA) form the signal peptide. A catalytic region spans residues 27–461 (QQVGTSQAEV…SNIKVGPIGS (435 aa)). Glu238 (nucleophile) is an active-site residue. The active-site Proton donor is Glu243. N-linked (GlcNAc...) asparagine glycosylation occurs at Asn296. Residues 462 to 495 (TFNSGGSNPGGGTTTTTTTQPTTTTTTAGNPGGT) are disordered. The tract at residues 462–496 (TFNSGGSNPGGGTTTTTTTQPTTTTTTAGNPGGTG) is thr-rich linker. Low complexity predominate over residues 475–490 (TTTTTTQPTTTTTTAG). Positions 496-532 (GVAQHYGQCGGIGWTGPTTCASPYTCQKLNDYYSQCL) constitute a CBM1 domain. Disulfide bonds link Cys504-Cys521 and Cys515-Cys531.

The protein belongs to the glycosyl hydrolase 7 (cellulase C) family.

The protein localises to the secreted. The enzyme catalyses Hydrolysis of (1-&gt;4)-beta-D-glucosidic linkages in cellulose and cellotetraose, releasing cellobiose from the non-reducing ends of the chains.. The biological conversion of cellulose to glucose generally requires three types of hydrolytic enzymes: (1) Endoglucanases which cut internal beta-1,4-glucosidic bonds; (2) Exocellobiohydrolases that cut the disaccharide cellobiose from the non-reducing end of the cellulose polymer chain; (3) Beta-1,4-glucosidases which hydrolyze the cellobiose and other short cello-oligosaccharides to glucose. The protein is Probable 1,4-beta-D-glucan cellobiohydrolase B (cbhB) of Aspergillus fumigatus (strain CBS 144.89 / FGSC A1163 / CEA10) (Neosartorya fumigata).